Consider the following 1408-residue polypeptide: ABC multidrug transporter MDR1 (1408 aa).

Positions Ile79–Asn88 are enriched in polar residues. Residues Ile79–Ser102 are disordered. A run of 2 helical transmembrane segments spans residues Phe147–Gly167 and Leu223–Trp243. In terms of domain architecture, ABC transmembrane type-1 1 spans Val157–Lys464. Residue Asn244 is glycosylated (N-linked (GlcNAc...) asparagine). The next 4 helical transmembrane spans lie at Lys296–Val316, Leu321–Thr341, Ile408–Val428, and Gly436–Ala456. Residues Ile499–Asn744 form the ABC transporter 1 domain. ATP is bound at residue Gly534–Ser541. An N-linked (GlcNAc...) asparagine glycan is attached at Asn606. The next 2 helical transmembrane spans lie at Ile838–Phe858 and Leu882–Phe902. The 288-residue stretch at Ile838 to Lys1125 folds into the ABC transmembrane type-1 2 domain. N-linked (GlcNAc...) asparagine glycosylation occurs at Asn934. 4 helical membrane-spanning segments follow: residues Gly952 to Cys972, Leu981 to Ile999, Gly1072 to Ala1092, and Phe1099 to Phe1119. Asn1127 and Asn1182 each carry an N-linked (GlcNAc...) asparagine glycan. The ABC transporter 2 domain maps to Val1162 to Met1402. Gly1197–Ser1204 lines the ATP pocket. N-linked (GlcNAc...) asparagine glycosylation occurs at Asn1404.

It belongs to the ABC transporter superfamily. ABCB family. Multidrug resistance exporter (TC 3.A.1.201) subfamily.

The protein resides in the cell membrane. The catalysed reaction is itraconazole(in) + ATP + H2O = itraconazole(out) + ADP + phosphate + H(+). The enzyme catalyses voriconazole(in) + ATP + H2O = voriconazole(out) + ADP + phosphate + H(+). It catalyses the reaction fluconazole(in) + ATP + H2O = fluconazole(out) + ADP + phosphate + H(+). Its function is as follows. Pleiotropic ABC efflux transporter that confers resistance to structurally and functionally unrelated compounds including azoles such as fluconazole (FLC), itraconazole (ITC), posaconazole (POS), and voriconazole (VRC). The chain is ABC multidrug transporter MDR1 from Cryptococcus neoformans var. grubii serotype A (strain H99 / ATCC 208821 / CBS 10515 / FGSC 9487) (Filobasidiella neoformans var. grubii).